We begin with the raw amino-acid sequence, 256 residues long: Alcohol dehydrogenase (256 aa).

12-35 (FVAGLGGIGLDTSKELVKRDLKNL) contributes to the NAD(+) binding site. S140 contributes to the substrate binding site. Y153 (proton acceptor) is an active-site residue.

Belongs to the short-chain dehydrogenases/reductases (SDR) family. As to quaternary structure, homodimer.

It carries out the reaction a primary alcohol + NAD(+) = an aldehyde + NADH + H(+). It catalyses the reaction a secondary alcohol + NAD(+) = a ketone + NADH + H(+). In Drosophila teissieri (Fruit fly), this protein is Alcohol dehydrogenase (Adh).